The chain runs to 216 residues: Eukaryotic translation initiation factor 3 subunit K (216 aa).

The PCI domain maps to 40–202; it reads YDLDANLAVL…HIKSKNIAEK (163 aa).

Belongs to the eIF-3 subunit K family. Component of the eukaryotic translation initiation factor 3 (eIF-3) complex.

Its subcellular location is the cytoplasm. Functionally, component of the eukaryotic translation initiation factor 3 (eIF-3) complex, which is involved in protein synthesis of a specialized repertoire of mRNAs and, together with other initiation factors, stimulates binding of mRNA and methionyl-tRNAi to the 40S ribosome. The eIF-3 complex specifically targets and initiates translation of a subset of mRNAs involved in cell proliferation. This Nematostella vectensis (Starlet sea anemone) protein is Eukaryotic translation initiation factor 3 subunit K.